Consider the following 214-residue polypeptide: Glutathione S-transferase 1 (214 aa).

The region spanning 2–83 is the GST N-terminal domain; sequence APMKLYGAVM…YAARKNKPEL (82 aa). Glutathione contacts are provided by residues Ser12, 41 to 42, 54 to 55, and 67 to 68; these read HK, QV, and ES. In terms of domain architecture, GST C-terminal spans 88 to 214; sequence NLEEAAMVDV…KVAALMKPSA (127 aa).

This sequence belongs to the GST superfamily. Phi family. In terms of assembly, homodimer or heterodimer of GST-I and GST-IV (=GST-II). In terms of tissue distribution, expressed in the stem and leaves, lower levels are seen in the pollen and endosperm.

It carries out the reaction RX + glutathione = an S-substituted glutathione + a halide anion + H(+). Conjugation of reduced glutathione to a wide number of exogenous and endogenous hydrophobic electrophiles. Involved in the detoxification of certain herbicides. This chain is Glutathione S-transferase 1 (GST1), found in Zea mays (Maize).